We begin with the raw amino-acid sequence, 692 residues long: SH3 domain-containing protein 21 (692 aa).

A disordered region spans residues 1–60; it reads MVQSELQLQPRAGGRAEAASWGDRGNDKGGFGNPDMPSVSPGPQRPPKLSSLAYDSPPDY. The SH3 domain maps to 65 to 126; the sequence is SHPEAYRVLF…PDNFVLPPPP (62 aa). Disordered regions lie at residues 132–501, 536–605, and 672–692; these read PRKV…EVLP, PKGG…SQET, and VMQG…TQTY. A compositionally biased stretch (basic and acidic residues) spans 177–186; that stretch reads PSRDSQKLTS. Polar residues predominate over residues 210-220; sequence TQTPQQRSVSS. Basic and acidic residues-rich tracts occupy residues 378–396, 490–501, and 542–582; these read VSTR…EALQ, NEERLLRGEVLP, and SKEE…KEEV. A coiled-coil region spans residues 628–678; the sequence is SLRGEVESLRRALELMGVQLERKLTDIWEELKSEKEQRQRLEVQVMQGTQK. Residues 673-692 show a composition bias toward polar residues; it reads MQGTQKSQTPRIIHAQTQTY.

This chain is SH3 domain-containing protein 21 (SH3D21), found in Macaca fascicularis (Crab-eating macaque).